Consider the following 555-residue polypeptide: Heterochromatin protein 1-binding protein 3 (555 aa).

An N-acetylalanine modification is found at alanine 2. At serine 6 the chain carries Phosphoserine. Residues 29 to 134 (KLGEKVEDNT…KEKKVKKTIP (106 aa)) form a disordered region. A Phosphothreonine modification is found at threonine 51. The span at 51 to 67 (TPPKSKLAEGVEEKPEP) shows a compositional bias: basic and acidic residues. Lysine 64 is covalently cross-linked (Glycyl lysine isopeptide (Lys-Gly) (interchain with G-Cter in SUMO2)). Residue threonine 85 is modified to Phosphothreonine. Lysine 97 participates in a covalent cross-link: Glycyl lysine isopeptide (Lys-Gly) (interchain with G-Cter in SUMO2). Basic and acidic residues predominate over residues 100-127 (PENEEKEENKPSEETKKDEKDQSKEKEK). Residues serine 142, serine 155, and serine 156 each carry the phosphoserine modification. Residues 157 to 232 (PRPKMDAILT…GASGSFVVVQ (76 aa)) form the H15 1 domain. Residue lysine 190 is modified to N6-acetyllysine. The interval 227 to 254 (SFVVVQKSRKPPQKSRNRKNRSSAVDPE) is disordered. Positions 233 to 247 (KSRKPPQKSRNRKNR) are enriched in basic residues. Phosphoserine occurs at positions 248 and 249. 2 H15 domains span residues 255 to 330 (PQVK…QLKK) and 337 to 413 (LGGS…QLCF). A Glycyl lysine isopeptide (Lys-Gly) (interchain with G-Cter in SUMO2) cross-link involves residue lysine 258. Residues 422–555 (LFPKKEPDDS…TMKKSFKAKK (134 aa)) are disordered. Residues 430 to 452 (DSKDEDEDEDEDDSSEEDSEDEE) are compositionally biased toward acidic residues. Serine 443, serine 444, and serine 448 each carry phosphoserine. Basic residues predominate over residues 491 to 512 (GKTRPLPKKAPPKAKSPAKKAR). Residues 513-532 (PSPSVIKKPSGSSSKKPAAS) show a composition bias toward low complexity. The span at 545-555 (STMKKSFKAKK) shows a compositional bias: basic residues.

Interacts (via PxVxL motif) with CBX5.

The protein localises to the nucleus. Its subcellular location is the chromosome. Functionally, component of heterochromatin that maintains heterochromatin integrity during G1/S progression and regulates the duration of G1 phase to critically influence cell proliferative capacity. May play a role in hypoxia-induced oncogenesis. The protein is Heterochromatin protein 1-binding protein 3 (HP1BP3) of Bos taurus (Bovine).